The primary structure comprises 163 residues: NADH-quinone oxidoreductase subunit I (163 aa).

4Fe-4S ferredoxin-type domains lie at 53–83 and 94–123; these read LRRYPNGEERCIACKLCEAICPAQAITIEAG and VRYDIDMVKCIYCGFCQEACPVDAIVEGPN. Positions 63, 66, 69, 73, 103, 106, 109, and 113 each coordinate [4Fe-4S] cluster.

It belongs to the complex I 23 kDa subunit family. In terms of assembly, NDH-1 is composed of 14 different subunits. Subunits NuoA, H, J, K, L, M, N constitute the membrane sector of the complex. [4Fe-4S] cluster serves as cofactor.

It is found in the cell inner membrane. The enzyme catalyses a quinone + NADH + 5 H(+)(in) = a quinol + NAD(+) + 4 H(+)(out). Functionally, NDH-1 shuttles electrons from NADH, via FMN and iron-sulfur (Fe-S) centers, to quinones in the respiratory chain. The immediate electron acceptor for the enzyme in this species is believed to be ubiquinone. Couples the redox reaction to proton translocation (for every two electrons transferred, four hydrogen ions are translocated across the cytoplasmic membrane), and thus conserves the redox energy in a proton gradient. The chain is NADH-quinone oxidoreductase subunit I from Brucella canis (strain ATCC 23365 / NCTC 10854 / RM-666).